The chain runs to 196 residues: MTIKLIVGLANPGAEYAQTRHNAGAWFVDALAERHGQSLKEESKFFGYTARLSLAGHDLRLLVPTTFMNLSGKAVSALAGFYRIAPDEILVAHDELDLPPGVAKLKLGGGNGGHNGLKDIQSKLGNNPNFHRLRIGIGHPGDKSKVVGFVLGKPLASEQPLIDDAIDEALRCTDLLMQDGMDKAMNRLNGFRASAR.

Position 16 (Tyr-16) interacts with tRNA. The active-site Proton acceptor is the His-21. Phe-67, Asn-69, and Asn-115 together coordinate tRNA.

Belongs to the PTH family. Monomer.

Its subcellular location is the cytoplasm. It carries out the reaction an N-acyl-L-alpha-aminoacyl-tRNA + H2O = an N-acyl-L-amino acid + a tRNA + H(+). In terms of biological role, hydrolyzes ribosome-free peptidyl-tRNAs (with 1 or more amino acids incorporated), which drop off the ribosome during protein synthesis, or as a result of ribosome stalling. Functionally, catalyzes the release of premature peptidyl moieties from peptidyl-tRNA molecules trapped in stalled 50S ribosomal subunits, and thus maintains levels of free tRNAs and 50S ribosomes. This Edwardsiella ictaluri (strain 93-146) protein is Peptidyl-tRNA hydrolase.